A 97-amino-acid chain; its full sequence is uncharacterized protein (97 aa).

This is an uncharacterized protein from Geobacillus stearothermophilus (Bacillus stearothermophilus).